A 261-amino-acid polypeptide reads, in one-letter code: Ubiquinone biosynthesis O-methyltransferase (261 aa).

Residues 1–22 form a disordered region; the sequence is MTMQVDPSANSSAASSAAPGTT. Residues 8-18 show a composition bias toward low complexity; the sequence is SANSSAASSAA. S-adenosyl-L-methionine is bound by residues Arg-55, Gly-86, Asp-107, and Met-149.

The protein belongs to the methyltransferase superfamily. UbiG/COQ3 family.

It catalyses the reaction a 3-demethylubiquinol + S-adenosyl-L-methionine = a ubiquinol + S-adenosyl-L-homocysteine + H(+). It carries out the reaction a 3-(all-trans-polyprenyl)benzene-1,2-diol + S-adenosyl-L-methionine = a 2-methoxy-6-(all-trans-polyprenyl)phenol + S-adenosyl-L-homocysteine + H(+). The protein operates within cofactor biosynthesis; ubiquinone biosynthesis. O-methyltransferase that catalyzes the 2 O-methylation steps in the ubiquinone biosynthetic pathway. The polypeptide is Ubiquinone biosynthesis O-methyltransferase (Nitrobacter winogradskyi (strain ATCC 25391 / DSM 10237 / CIP 104748 / NCIMB 11846 / Nb-255)).